The chain runs to 508 residues: Dihydroniloticin synthase CYP71CD4 (508 aa).

A helical membrane pass occupies residues 6-26 (LDFFSVTSFIIFFLFLFRLVW). Cys-449 contributes to the heme binding site.

Belongs to the cytochrome P450 family. Heme serves as cofactor. As to expression, mainly expressed in roots and, to a lesser extent, in stems.

The protein resides in the membrane. It catalyses the reaction tirucalla-7,24-dien-3beta-ol + 2 reduced [NADPH--hemoprotein reductase] + 2 O2 = dihydroniloticin + 2 oxidized [NADPH--hemoprotein reductase] + 2 H2O + 2 H(+). It participates in secondary metabolite biosynthesis; terpenoid biosynthesis. Functionally, monooxygenase involved in the biosynthesis of quassinoids triterpene natural products such as ailanthone, chaparrinone, glaucarubinone and amarolide, allelopathic degraded triterpene lactones inhibiting the growth of other plants, and possessing antimalarial, antifeedant, insecticidal, anti-inflammatory and anticancer activities. Catalyzes the conversion of tirucalladienol to dihydroniloticin. The sequence is that of Dihydroniloticin synthase CYP71CD4 from Ailanthus altissima (Tree-of-heaven).